The sequence spans 298 residues: Glutamyl-Q tRNA(Asp) synthetase (298 aa).

L-glutamate contacts are provided by residues R9 to S13 and E45. Positions P12–S22 match the 'HIGH' region motif. Residues C101, C103, Y115, and C119 each coordinate Zn(2+). The L-glutamate site is built by Y172 and R190. A 'KMSKS' region motif is present at residues K228 to Q232. K231 lines the ATP pocket.

Belongs to the class-I aminoacyl-tRNA synthetase family. GluQ subfamily. Zn(2+) serves as cofactor.

Catalyzes the tRNA-independent activation of glutamate in presence of ATP and the subsequent transfer of glutamate onto a tRNA(Asp). Glutamate is transferred on the 2-amino-5-(4,5-dihydroxy-2-cyclopenten-1-yl) moiety of the queuosine in the wobble position of the QUC anticodon. The polypeptide is Glutamyl-Q tRNA(Asp) synthetase (Salmonella typhimurium (strain LT2 / SGSC1412 / ATCC 700720)).